The primary structure comprises 2230 residues: DNA polymerase epsilon catalytic subunit A (2230 aa).

Positions 1 to 19 (MPTRQPSKYGNKFRSSSAS) are enriched in polar residues. A disordered region spans residues 1-24 (MPTRQPSKYGNKFRSSSASFKPKR). Zn(2+)-binding residues include Cys-2101, Cys-2104, Cys-2136, and Cys-2139. Residues 2101–2139 (CNACCLIRDLDLCRDEDVLPEMGSDPNKAAPKPWRCPFC) form a CysA-type zinc finger. The [4Fe-4S] cluster site is built by Cys-2170, Cys-2173, Cys-2185, and Cys-2187. The CysB motif signature appears at 2170 to 2187 (CSKCGGLKISDFMEHCSC).

It belongs to the DNA polymerase type-B family. As to quaternary structure, heterotetramer. Consists of 4 subunits: pol2, dpb2, dpb3 and dpb4. The cofactor is [4Fe-4S] cluster.

The protein localises to the nucleus. It catalyses the reaction DNA(n) + a 2'-deoxyribonucleoside 5'-triphosphate = DNA(n+1) + diphosphate. Its function is as follows. DNA polymerase II participates in chromosomal DNA replication. This is DNA polymerase epsilon catalytic subunit A (pol2) from Aspergillus fumigatus (strain ATCC MYA-4609 / CBS 101355 / FGSC A1100 / Af293) (Neosartorya fumigata).